Reading from the N-terminus, the 2549-residue chain is Serine/threonine-protein kinase mTOR (2549 aa).

Met1 carries the N-acetylmethionine modification. An interaction with NBN region spans residues 1 to 651 (MLGTGPAAAT…HVVSQTAVQV (651 aa)). HEAT repeat units lie at residues 16-53 (SSNV…MELR), 55-99 (MSQE…VEGG), 100-137 (NATR…AMAG), 138-179 (DTFT…AISV), 180-220 (PTFF…LILT), 222-276 (QREP…RISS), 277-313 (MEGE…PRHI), 314-364 (TPFT…CCRD), 365-409 (LMEE…AFTD), 410-445 (TQYL…VAVR), 446-494 (SEFK…RAMG), 495-529 (PGIQ…RQIP), 530-563 (QLKK…GLAH), 564-596 (QLAS…EFEG), 597-636 (HSLT…SIHL), 637-683 (ISGH…DERF), 686-724 (HLAQ…MNPA), 727-766 (MPFL…NAPR), 769-811 (RPYM…VSGL), 814-853 (RKWV…STGY), 857-893 (PYRK…LLGA), 894-942 (LDPY…GNLP), 943-988 (LDEF…KCVQ), 989-1027 (FLPQ…KSHI), 1029-1068 (PYMD…GEFK), 1069-1105 (LYLP…LFGA), 1106-1144 (NLDD…RLTE), 1145-1188 (SLDF…GKKY), 1189-1225 (QIFI…LADE), 1226-1273 (EEDP…GAAR), 1274-1311 (RVSK…QAYN), and 1312-1345 (PMAR…ELAL). Ser567 carries the post-translational modification Phosphoserine. Residue Thr1162 is modified to Phosphothreonine. Position 1218 is an N6-acetyllysine (Lys1218). Residue Ser1261 is modified to Phosphoserine. TPR repeat units follow at residues 1346-1382 (TSQD…GIVL), 1383-1408 (LGER…QKGP), 1409-1442 (TPAI…HFGE), 1443-1473 (LEIQ…NKDD), 1474-1507 (PELM…VNDE), 1508-1541 (TQAK…RDTH), 1542-1574 (DGAF…LDAE), 1575-1614 (LTAM…RREI), 1615-1649 (IRQI…PHED), 1650-1693 (MRTW…PTVH), 1694-1731 (PQVT…AQHA), 1732-1786 (IATE…DRSW), 1787-1846 (YKAW…STEG), 1898-1930 (NNLQ…VKAI), 1931-1970 (QIDT…YHPQ), and 1971-2005 (ALIY…SNTL). An FAT domain is found at 1382-1982 (LLGERAAKCR…IYPLTVASKS (601 aa)). Residues Lys1662, Lys1702, and Arg1749 each contribute to the 1D-myo-inositol hexakisphosphate site. The tract at residues 1812 to 1867 (DEKKKLRHASGANITNATTAATTAATATTTASTEGSNSESEAESTENSPTPSPLQK) is disordered. Positions 1820-1860 (ASGANITNATTAATTAATATTTASTEGSNSESEAESTENSP) are enriched in low complexity. The tract at residues 2012–2144 (VSEELIRVAI…DLELAVPGTY (133 aa)) is sufficient for interaction with the FKBP1A/rapamycin complex. Lys2066 participates in a covalent cross-link: Glycyl lysine isopeptide (Lys-Gly) (interchain with G-Cter in ubiquitin). In terms of domain architecture, PI3K/PI4K catalytic spans 2156–2469 (IAPSLQVITS…GVELGEPAHK (314 aa)). Ser2159 is subject to Phosphoserine; by TBK1. The G-loop stretch occupies residues 2162–2168 (VITSKQR). A Phosphothreonine modification is found at Thr2164. Ser2165 and Gln2167 together coordinate ATP. The residue at position 2173 (Thr2173) is a Phosphothreonine; by PKB/AKT1. ATP-binding residues include Leu2185, Lys2187, Glu2190, Tyr2225, Gly2238, Trp2239, Val2240, and Thr2245. The interval 2258–2296 (KILLNIEHRIMLRMAPDYDHLTLMQKVEVFEHAVNNTAG) is interaction with MLST8. Residues 2335–2343 (GLGDRHPSN) are catalytic loop. Asn2343 lines the Mg(2+) pocket. Residues Met2345 and Ile2356 each coordinate ATP. The activation loop stretch occupies residues 2355–2380 (HIDFGDCFEVAMTREKFPEKIPFRLT). Asp2357 contacts Mg(2+). Thr2446 is modified (phosphothreonine; by RPS6KB1). A Phosphoserine; by RPS6KB1 modification is found at Ser2448. Ser2478 is subject to Phosphoserine. Ser2481 bears the Phosphoserine; by autocatalysis mark. Residues 2517–2549 (DTLDVPTQVELLIKQATSHENLCQCYIGWCPFW) form the FATC domain.

This sequence belongs to the PI3/PI4-kinase family. In terms of assembly, part of the mechanistic target of rapamycin complex 1 (mTORC1) which contains MTOR, MLST8 and RPTOR. The mTORC1 complex is a 1 Md obligate dimer of two stoichiometric heterotetramers with overall dimensions of 290 A x 210 A x 135 A. It has a rhomboid shape and a central cavity, the dimeric interfaces are formed by interlocking interactions between the two MTOR and the two RPTOR subunits. The MLST8 subunit forms distal foot-like protuberances, and contacts only one MTOR within the complex, while the small AKT1S1/PRAS40 localizes to the midsection of the central core, in close proximity to RPTOR. mTORC1 associates with AKT1S1/PRAS40, which inhibits its activity by blocking MTOR substrate-recruitment site. Component of the mechanistic target of rapamycin complex 2 (mTORC2), consisting in two heterotretramers composed of MTOR, MLST8, RICTOR and MAPKAP1/SIN1. Interacts with PLPP7 and PML. Interacts with PRR5 and RICTOR; the interaction is direct within the mTORC2 complex and interaction with RICTOR is enhanced by deubiquitination of RICTOR by USP9X. mTORC1 and mTORC2 associate with DEPTOR, which regulates their activity. Interacts with WAC; WAC positively regulates MTOR activity by promoting the assembly of the TTT complex composed of TELO2, TTI1 and TTI2 and the RUVBL complex composed of RUVBL1 and RUVBL2 into the TTT-RUVBL complex which leads to the dimerization of the mTORC1 complex and its subsequent activation. Interacts with UBQLN1. Interacts with TTI1 and TELO2. Interacts with CLIP1; phosphorylates and regulates CLIP1. Interacts with NBN. Interacts with HTR6. Interacts with BRAT1. Interacts with MEAK7 (via C-terminal domain); the interaction increases upon nutrient stimulation. Interacts with TM4SF5; the interaction is positively regulated by arginine and is negatively regulated by leucine. Interacts with GPR137B. Interacts with NCKAP1L. Interacts with TPCN1 and TPCN2; the interaction is required for TPCN1 and TPCN2 sensitivity to ATP. Interacts with ATP6V1A and with CRYAB, forming a ternary complex. Interacts with SLC38A7; this interaction mediates the recruitment of mTORC1 to the lysosome and its subsequent activation. Interacts with TSPAN8. Autophosphorylates when part of mTORC1 or mTORC2. Phosphorylation at Ser-1261, Ser-2159 and Thr-2164 promotes autophosphorylation. Phosphorylated at Ser-2448 by RPS6KB1. Phosphorylation in the kinase domain modulates the interactions of MTOR with RPTOR and AKT1S1/PRAS40 and leads to increased intrinsic mTORC1 kinase activity. Phosphorylation at Ser-2159 by TBK1 in response to growth factors and pathogen recognition receptors promotes mTORC1 activity. Phosphorylation at Ser-2159 by TBK1 in response to EGF growth factor promotes mTORC2 activity, leading to AKT1 phosphorylation and activation. Phosphorylation at Thr-2173 in the ATP-binding region by AKT1 strongly reduces kinase activity. In terms of processing, ubiquitinated at Lys-2066 by the SCF(FBXO22) complex via 'Lys-27'-linked ubiquitination prevents mTORC1 substrate recruitment. Expressed in numerous tissues, with highest levels in testis.

It localises to the lysosome membrane. Its subcellular location is the endoplasmic reticulum membrane. It is found in the golgi apparatus membrane. The protein localises to the cell membrane. The protein resides in the mitochondrion outer membrane. It localises to the cytoplasm. Its subcellular location is the nucleus. It is found in the PML body. The protein localises to the microsome membrane. The protein resides in the cytoplasmic vesicle. It localises to the phagosome. It carries out the reaction L-seryl-[protein] + ATP = O-phospho-L-seryl-[protein] + ADP + H(+). It catalyses the reaction L-threonyl-[protein] + ATP = O-phospho-L-threonyl-[protein] + ADP + H(+). The enzyme catalyses L-tyrosyl-[protein] + ATP = O-phospho-L-tyrosyl-[protein] + ADP + H(+). The mTORC1 complex is activated in response to nutrients, growth factors or amino acids: activation requires relocalization of the mTORC1 complex to lysosomes that is mediated by the Ragulator complex, SLC38A9, and the Rag GTPases RagA/RRAGA, RagB/RRAGB, RagC/RRAGC and RagD/RRAGD. Activation of mTORC1 by growth factors such as insulin involves AKT1-mediated phosphorylation of TSC1-TSC2, which leads to the activation of the RHEB GTPase a potent activator of the protein kinase activity of mTORC1. Insulin-stimulated and amino acid-dependent phosphorylation at Ser-1261 promotes autophosphorylation and the activation of mTORC1. On the other hand, low cellular energy levels can inhibit mTORC1 through activation of PRKAA1 while hypoxia inhibits mTORC1 through a REDD1-dependent mechanism which may also require PRKAA1. The kinase activity of MTOR within the mTORC1 complex is positively regulated by MLST8. The kinase activity of MTOR is inhibited by DEPTOR and AKT1S1. The non-canonical mTORC1 complex is independent of the RHEB GTPase and specifically mediates phosphorylation of MiT/TFE factors TFEB and TFE3 but not other mTORC1 substrates: it is activated by FLCN, which activates Rag GTPases RagC/RRAGC and RagD/RRAGD. MTOR is the target of the immunosuppressive and anti-cancer drug rapamycin which acts in complex with FKBP1A/FKBP12, and specifically inhibits its kinase activity. mTORC2 is also activated by growth factors, but seems to be nutrient-insensitive. mTORC2 associates and is directly activated by ribosomes. mTORC2 may also be regulated by RHEB but in an indirect manner through the PI3K signaling pathway. Its function is as follows. Serine/threonine protein kinase which is a central regulator of cellular metabolism, growth and survival in response to hormones, growth factors, nutrients, energy and stress signals. MTOR directly or indirectly regulates the phosphorylation of at least 800 proteins. Functions as part of 2 structurally and functionally distinct signaling complexes mTORC1 and mTORC2 (mTOR complex 1 and 2). In response to nutrients, growth factors or amino acids, mTORC1 is recruited to the lysosome membrane and promotes protein, lipid and nucleotide synthesis by phosphorylating key regulators of mRNA translation and ribosome synthesis. This includes phosphorylation of EIF4EBP1 and release of its inhibition toward the elongation initiation factor 4E (eiF4E). Moreover, phosphorylates and activates RPS6KB1 and RPS6KB2 that promote protein synthesis by modulating the activity of their downstream targets including ribosomal protein S6, eukaryotic translation initiation factor EIF4B, and the inhibitor of translation initiation PDCD4. Stimulates the pyrimidine biosynthesis pathway, both by acute regulation through RPS6KB1-mediated phosphorylation of the biosynthetic enzyme CAD, and delayed regulation, through transcriptional enhancement of the pentose phosphate pathway which produces 5-phosphoribosyl-1-pyrophosphate (PRPP), an allosteric activator of CAD at a later step in synthesis, this function is dependent on the mTORC1 complex. Regulates ribosome synthesis by activating RNA polymerase III-dependent transcription through phosphorylation and inhibition of MAF1 an RNA polymerase III-repressor. Activates dormant ribosomes by mediating phosphorylation of SERBP1, leading to SERBP1 inactivation and reactivation of translation. In parallel to protein synthesis, also regulates lipid synthesis through SREBF1/SREBP1 and LPIN1. To maintain energy homeostasis mTORC1 may also regulate mitochondrial biogenesis through regulation of PPARGC1A. In the same time, mTORC1 inhibits catabolic pathways: negatively regulates autophagy through phosphorylation of ULK1. Under nutrient sufficiency, phosphorylates ULK1 at 'Ser-758', disrupting the interaction with AMPK and preventing activation of ULK1. Also prevents autophagy through phosphorylation of the autophagy inhibitor DAP. Also prevents autophagy by phosphorylating RUBCNL/Pacer under nutrient-rich conditions. Prevents autophagy by mediating phosphorylation of AMBRA1, thereby inhibiting AMBRA1 ability to mediate ubiquitination of ULK1 and interaction between AMBRA1 and PPP2CA. mTORC1 exerts a feedback control on upstream growth factor signaling that includes phosphorylation and activation of GRB10 a INSR-dependent signaling suppressor. Among other potential targets mTORC1 may phosphorylate CLIP1 and regulate microtubules. The mTORC1 complex is inhibited in response to starvation and amino acid depletion. The non-canonical mTORC1 complex, which acts independently of RHEB, specifically mediates phosphorylation of MiT/TFE factors MITF, TFEB and TFE3 in the presence of nutrients, promoting their cytosolic retention and inactivation. Upon starvation or lysosomal stress, inhibition of mTORC1 induces dephosphorylation and nuclear translocation of TFEB and TFE3, promoting their transcription factor activity. The mTORC1 complex regulates pyroptosis in macrophages by promoting GSDMD oligomerization. MTOR phosphorylates RPTOR which in turn inhibits mTORC1. As part of the mTORC2 complex, MTOR transduces signals from growth factors to pathways involved in proliferation, cytoskeletal organization, lipogenesis and anabolic output. In response to growth factors, mTORC2 phosphorylates and activates AGC protein kinase family members, including AKT (AKT1, AKT2 and AKT3), PKC (PRKCA, PRKCB and PRKCE) and SGK1. In contrast to mTORC1, mTORC2 is nutrient-insensitive. mTORC2 plays a critical role in AKT1 activation by mediating phosphorylation of different sites depending on the context, such as 'Thr-450', 'Ser-473', 'Ser-477' or 'Thr-479', facilitating the phosphorylation of the activation loop of AKT1 on 'Thr-308' by PDPK1/PDK1 which is a prerequisite for full activation. mTORC2 also regulates the phosphorylation of SGK1 at 'Ser-422'. mTORC2 may regulate the actin cytoskeleton, through phosphorylation of PRKCA, PXN and activation of the Rho-type guanine nucleotide exchange factors RHOA and RAC1A or RAC1B. The mTORC2 complex also phosphorylates various proteins involved in insulin signaling, such as FBXW8 and IGF2BP1. May also regulate insulin signaling by acting as a tyrosine protein kinase that catalyzes phosphorylation of IGF1R and INSR; additional evidence are however required to confirm this result in vivo. Regulates osteoclastogenesis by adjusting the expression of CEBPB isoforms. Plays an important regulatory role in the circadian clock function; regulates period length and rhythm amplitude of the suprachiasmatic nucleus (SCN) and liver clocks. The chain is Serine/threonine-protein kinase mTOR from Homo sapiens (Human).